The following is a 383-amino-acid chain: Chaperone protein DnaJ (383 aa).

The J domain maps to 6–70 (DYYDVLGVGR…QKRAAYDQYG (65 aa)). The CR-type zinc-finger motif lies at 140–222 (GKETKISYSR…CHGTGREEER (83 aa)). C153, C156, C170, C173, C196, C199, C210, and C213 together coordinate Zn(2+). 4 CXXCXGXG motif repeats span residues 153–160 (CHTCHGSG), 170–177 (CHKCHGAG), 196–203 (CDVCGGTG), and 210–217 (CDTCHGTG).

This sequence belongs to the DnaJ family. As to quaternary structure, homodimer. Requires Zn(2+) as cofactor.

It is found in the cytoplasm. Its function is as follows. Participates actively in the response to hyperosmotic and heat shock by preventing the aggregation of stress-denatured proteins and by disaggregating proteins, also in an autonomous, DnaK-independent fashion. Unfolded proteins bind initially to DnaJ; upon interaction with the DnaJ-bound protein, DnaK hydrolyzes its bound ATP, resulting in the formation of a stable complex. GrpE releases ADP from DnaK; ATP binding to DnaK triggers the release of the substrate protein, thus completing the reaction cycle. Several rounds of ATP-dependent interactions between DnaJ, DnaK and GrpE are required for fully efficient folding. Also involved, together with DnaK and GrpE, in the DNA replication of plasmids through activation of initiation proteins. The protein is Chaperone protein DnaJ of Latilactobacillus sakei subsp. sakei (strain 23K) (Lactobacillus sakei subsp. sakei).